The chain runs to 542 residues: Putative inactive cadmium/zinc-transporting ATPase HMA3 (542 aa).

Topologically, residues 1–89 (MAEGEESKKM…VRPYGETSLK (89 aa)) are cytoplasmic. The HMA domain maps to 13–79 (QTSYFDVVGI…ALNQARLEAS (67 aa)). Residues 90-111 (SQWPSPFAIVSGVLLVLSFFKY) form a helical membrane-spanning segment. The Extracellular segment spans residues 112–114 (FYS). A helical transmembrane segment spans residues 115–134 (PLEWLAIVAVVAGVFPILAK). Residues 135–141 (AVASVTR) lie on the Cytoplasmic side of the membrane. Residues 142–162 (FRLDINALTLIAVIATLCMQD) traverse the membrane as a helical segment. A topological domain (extracellular) is located at residue phenylalanine 163. A helical membrane pass occupies residues 164-184 (TEAATIVFLFSVADWLESSAA). Topologically, residues 185 to 310 (HKASIVMSSL…QTKTQRFIDK (126 aa)) are cytoplasmic. Residues 311–333 (CSRYYTPAVVVSAACFAVIPVLL) traverse the membrane as a helical segment. Topologically, residues 334 to 341 (KVQDLSHW) are extracellular. A helical membrane pass occupies residues 342–359 (FHLALVVLVSGCPCGLIL). Residues 360 to 542 (STPVATFCAL…VAQALKELKS (183 aa)) are Cytoplasmic-facing.

The protein belongs to the cation transport ATPase (P-type) (TC 3.A.3) family. Type IB subfamily.

It is found in the membrane. This Arabidopsis thaliana (Mouse-ear cress) protein is Putative inactive cadmium/zinc-transporting ATPase HMA3 (HMA3).